Consider the following 329-residue polypeptide: Vacuolar protein sorting-associated protein 26B-like (329 aa).

The protein belongs to the VPS26 family.

It is found in the cytoplasm. Its subcellular location is the membrane. Its function is as follows. Probable component of the retromer complex, a complex required to retrieve lysosomal enzyme receptors (IGF2R and M6PR) from endosomes to the trans-Golgi network. The protein is Vacuolar protein sorting-associated protein 26B-like (vps26bl) of Danio rerio (Zebrafish).